The chain runs to 431 residues: Enolase (431 aa).

Q162 contacts (2R)-2-phosphoglycerate. E204 (proton donor) is an active-site residue. D241, E288, and D315 together coordinate Mg(2+). 4 residues coordinate (2R)-2-phosphoglycerate: K340, R369, S370, and K391. Catalysis depends on K340, which acts as the Proton acceptor.

Belongs to the enolase family. Mg(2+) is required as a cofactor.

It is found in the cytoplasm. Its subcellular location is the secreted. The protein localises to the cell surface. The catalysed reaction is (2R)-2-phosphoglycerate = phosphoenolpyruvate + H2O. Its pathway is carbohydrate degradation; glycolysis; pyruvate from D-glyceraldehyde 3-phosphate: step 4/5. Its function is as follows. Catalyzes the reversible conversion of 2-phosphoglycerate (2-PG) into phosphoenolpyruvate (PEP). It is essential for the degradation of carbohydrates via glycolysis. The polypeptide is Enolase (Phocaeicola vulgatus (strain ATCC 8482 / DSM 1447 / JCM 5826 / CCUG 4940 / NBRC 14291 / NCTC 11154) (Bacteroides vulgatus)).